Reading from the N-terminus, the 388-residue chain is Galactokinase (388 aa).

Residue 33–36 (EHTD) participates in substrate binding. ATP contacts are provided by residues S67 and 124-130 (GSGLSSS). Residues S130 and E162 each contribute to the Mg(2+) site. Residue D174 is the Proton acceptor of the active site. Y224 provides a ligand contact to substrate.

Belongs to the GHMP kinase family. GalK subfamily.

The protein localises to the cytoplasm. It carries out the reaction alpha-D-galactose + ATP = alpha-D-galactose 1-phosphate + ADP + H(+). It functions in the pathway carbohydrate metabolism; galactose metabolism. Functionally, catalyzes the transfer of the gamma-phosphate of ATP to D-galactose to form alpha-D-galactose-1-phosphate (Gal-1-P). This Streptococcus thermophilus protein is Galactokinase.